A 53-amino-acid chain; its full sequence is UPF0391 membrane protein Bcen2424_6479 (53 aa).

The next 2 membrane-spanning stretches (helical) occupy residues 5–25 and 30–50; these read AIIF…GIAA and IAKI…LLGV.

Belongs to the UPF0391 family.

It localises to the cell membrane. The sequence is that of UPF0391 membrane protein Bcen2424_6479 from Burkholderia cenocepacia (strain HI2424).